The chain runs to 479 residues: MSQPLSLTAEQPVHFIGVGGIGMSAIAGILAERSYNVTGSDPKQSAQSQLLRQQGARVFQQQNAATIDAICSGVDRAPLVVVSSAIPETNPELEAARGAGLRVVHRSELLAWLINAQHSIAVAGSHGKTTTSSLIASLLHSAGLDPTAIIGGVVPAFGSNARNGAGEWLVAEADESDGSLVRFHPQLGLITNLELDHTDHYPNLDALVATMRRFSGNCSSVLANRDCPVLSAELSADHWWSLQENSSAHFRAVPLSLDGAGCRADYLEDGRRLGELALPMAGIHNLSNALAAVAACRLAGASFADLQAALTELVPPGRRFDLRGEWQGRLIVDDYAHHPSEVDATLTMAQLMVSSGKSTLPWVPKRVVAVFQPHRYSRTAQFMERFAEALGCADEVLVAPLYSAGESAIEGVSSATLAEKVQQAGHSARALADMDSLVDAVQQCSSAGDLVLVMGAGDVNQLWSRLQSSADQQGLATAA.

Residue 124–130 participates in ATP binding; sequence GSHGKTT.

Belongs to the MurCDEF family.

The protein resides in the cytoplasm. It carries out the reaction UDP-N-acetyl-alpha-D-muramate + L-alanine + ATP = UDP-N-acetyl-alpha-D-muramoyl-L-alanine + ADP + phosphate + H(+). Its pathway is cell wall biogenesis; peptidoglycan biosynthesis. Cell wall formation. The sequence is that of UDP-N-acetylmuramate--L-alanine ligase from Synechococcus sp. (strain RCC307).